The primary structure comprises 388 residues: Probable proton-coupled zinc antiporter SLC30A3 (388 aa).

The interval 1 to 41 is disordered; it reads MEPSLATGGSETTRLVSARDRSSAGGGLRLKSLFTEPSEPL. Residues 1-75 are Cytoplasmic-facing; sequence MEPSLATGGS…SPERVQARRQ (75 aa). Residues serine 63 and serine 66 each carry the phosphoserine modification. Residues 76-96 traverse the membrane as a helical segment; that stretch reads LYAACAVCFIFMAGEVVGGYL. Residues 97-105 are Lumenal-facing; the sequence is AHSLAIMTD. Residues 106–126 form a helical membrane-spanning segment; that stretch reads AAHLLADIGSMLASLFSLWLS. The Zn(2+) site is built by histidine 108 and aspartate 112. At 127–145 the chain is on the cytoplasmic side; it reads TRPATRTMTFGWHRSETLG. The chain crosses the membrane as a helical span at residues 146-166; it reads ALASVVSLWIVTGILLYLAFL. The Lumenal portion of the chain corresponds to 167 to 177; it reads RLLHSDYHIEA. The helical transmembrane segment at 178–198 threads the bilayer; it reads GAMLLTASIAVCANLLMAFVL. The Cytoplasmic segment spans residues 199 to 235; the sequence is HQTGAPHSHGSTGAEYAPLEEGHGYPMSLGNTSVRAA. Residues 236-256 form a helical membrane-spanning segment; that stretch reads FVHVLGDLLQSFGVLAASILI. Histidine 238 and aspartate 242 together coordinate Zn(2+). Topologically, residues 257 to 263 are lumenal; sequence YFKPQYK. A helical transmembrane segment spans residues 264-284; it reads VADPISTFLFSICALGSTAPT. Residues 285–388 are Cytoplasmic-facing; the sequence is LRDVLLVLME…CLRCQEPSQA (104 aa).

This sequence belongs to the cation diffusion facilitator (CDF) transporter (TC 2.A.4) family. SLC30A subfamily. As to quaternary structure, homodimer. Homodimerization is negligible compared to the human protein. It could explain the lower efficiency of zinc transport. Interacts with TMEM163. Expression is restricted to brain (at protein level). In the brain, most abundant in hippocampus and cerebral cortex. The mRNA is also detected in testis, expression being restricted to germ cells and highest in pachytene spermatocytes and round spermatids.

Its subcellular location is the cytoplasmic vesicle. The protein localises to the secretory vesicle. The protein resides in the synaptic vesicle membrane. It localises to the synapse. It is found in the synaptosome. Its subcellular location is the late endosome membrane. The protein localises to the lysosome membrane. It carries out the reaction Zn(2+)(in) + 2 H(+)(out) = Zn(2+)(out) + 2 H(+)(in). Its function is as follows. Probable proton-coupled zinc ion antiporter mediating the import of zinc from cytoplasm into synaptic vesicles and participating to cellular zinc ion homeostasis in the brain. The sequence is that of Probable proton-coupled zinc antiporter SLC30A3 from Mus musculus (Mouse).